The following is a 505-amino-acid chain: Histidine ammonia-lyase (505 aa).

Residues 141–143 (ASG) constitute a cross-link (5-imidazolinone (Ala-Gly)). S142 carries the 2,3-didehydroalanine (Ser) modification.

It belongs to the PAL/histidase family. Contains an active site 4-methylidene-imidazol-5-one (MIO), which is formed autocatalytically by cyclization and dehydration of residues Ala-Ser-Gly.

It is found in the cytoplasm. It carries out the reaction L-histidine = trans-urocanate + NH4(+). Its pathway is amino-acid degradation; L-histidine degradation into L-glutamate; N-formimidoyl-L-glutamate from L-histidine: step 1/3. This Bacillus thuringiensis (strain Al Hakam) protein is Histidine ammonia-lyase.